Consider the following 820-residue polypeptide: Leucine--tRNA ligase (820 aa).

Residues 40–51 (PYPSGAGLHVGH) carry the 'HIGH' region motif. A 'KMSKS' region motif is present at residues 601–605 (KMSKS). Lys604 serves as a coordination point for ATP.

The protein belongs to the class-I aminoacyl-tRNA synthetase family.

The protein localises to the cytoplasm. It carries out the reaction tRNA(Leu) + L-leucine + ATP = L-leucyl-tRNA(Leu) + AMP + diphosphate. This Chlamydia pneumoniae (Chlamydophila pneumoniae) protein is Leucine--tRNA ligase.